A 522-amino-acid polypeptide reads, in one-letter code: MPELTEFQKKRLENIKRNNDLLKKLHLSGVASQIKHEAGVLEKSRAPAKKKQKTTNTRATKSASPTLPTRRSRRLRGESADDVKGIPNVNDNQLLKMGSPDGQDKNFIDAIKEKPVIGDVKLSDLIKDEDESALLEKFKRFNNGNFSSGDFFEEIKKRQGDVTGMDEFDLDLYDVFQPNEIKITYERISATYFHPAMEKKLIIAGDTSGTVGFWNVRDEPLADSEEDRMEEPDITRVKLFTKNVGRIDCFPADTSKILLTSYDGSIRSVHLNNLQSEEVLTLKNEYDDSLGISDCQFSYENPNVLFLTTLGGEFTTFDTRVKKSEYNLRRLADKKIGSMAINPMRPYEIATGSLDRTLKIWDTRNLVKKPEWSQYEDYPSHEIVSTYDSRLSVSAVSYSPTDGTLVCNGYDDTIRLFDVKSRDHLSAKLEPKLTIQHNCQTGRWTSILKARFKPNKNVFAIANMKRAIDIYNSEGQQLAHLPTATVPAVISWHPLRNWIAGGNSSGKIFLFTDDSGTIKQEE.

The tract at residues 38–100 (AGVLEKSRAP…DNQLLKMGSP (63 aa)) is disordered. Positions 54-63 (TTNTRATKSA) are enriched in polar residues. Residue Ser-64 is modified to Phosphoserine. Residue Thr-69 is modified to Phosphothreonine. The segment covering 75–84 (LRGESADDVK) has biased composition (basic and acidic residues). WD repeat units lie at residues 183 to 224 (ITYE…LADS), 239 to 281 (LFTK…EVLT), 287 to 327 (DDSL…SEYN), 331 to 371 (LADK…KKPE), 388 to 427 (DSRL…HLSA), 442 to 481 (GRWT…LAHL), and 482 to 521 (PTAT…IKQE). At Ser-224 the chain carries Phosphoserine.

It belongs to the WD repeat DDB2/WDR76 family.

Its subcellular location is the cytoplasm. It localises to the nucleus. Its function is as follows. DNA-binding protein that binds to both single- and double-stranded DNA. Binds preferentially to UV-damaged DNA in vitro. May be involved in DNA-metabolic processes. In Saccharomyces cerevisiae (strain ATCC 204508 / S288c) (Baker's yeast), this protein is DNA damage-binding protein CMR1.